The chain runs to 146 residues: Keratin-associated protein 4-1 (146 aa).

18 repeat units span residues 5-9 (CCGSV), 24-28 (CCRPS), 29-33 (CCQTT), 34-38 (CCCPS), 44-48 (CCRPS), 54-58 (CCQTT), 59-63 (CCRPS), 64-68 (CCHPV), 69-73 (CCQTT), 83-87 (CCRPL), 88-92 (CCQTT), 102-106 (CCRPL), 107-111 (CCQTT), 121-125 (CCRPL), 126-130 (CCQTT), 131-135 (CCRAT), 136-140 (CCRPS), and 141-145 (CCGSS). Residues 5-145 (CCGSVCSDQG…CCRPSCCGSS (141 aa)) form an 18 X 5 AA repeats of C-C-[GRQC]-[SPT]-[VSTL] region.

This sequence belongs to the KRTAP type 4 family. In terms of assembly, interacts with hair keratins. In terms of tissue distribution, expressed in the hair follicles.

Its function is as follows. In the hair cortex, hair keratin intermediate filaments are embedded in an interfilamentous matrix, consisting of hair keratin-associated proteins (KRTAP), which are essential for the formation of a rigid and resistant hair shaft through their extensive disulfide bond cross-linking with abundant cysteine residues of hair keratins. The matrix proteins include the high-sulfur and high-glycine-tyrosine keratins. The polypeptide is Keratin-associated protein 4-1 (KRTAP4-1) (Homo sapiens (Human)).